The chain runs to 255 residues: Taurine import ATP-binding protein TauB (255 aa).

The ABC transporter domain occupies 2–229 (LQISHLYADY…RFVAGESSRS (228 aa)). 34–41 (GPSGCGKT) is a binding site for ATP.

The protein belongs to the ABC transporter superfamily. Taurine importer (TC 3.A.1.17.1) family. In terms of assembly, the complex is composed of two ATP-binding proteins (TauB), two transmembrane proteins (TauC) and a solute-binding protein (TauA).

The protein localises to the cell inner membrane. The enzyme catalyses taurine(out) + ATP + H2O = taurine(in) + ADP + phosphate + H(+). Functionally, part of the ABC transporter complex TauABC involved in taurine import. Responsible for energy coupling to the transport system. The sequence is that of Taurine import ATP-binding protein TauB from Escherichia coli O6:K15:H31 (strain 536 / UPEC).